The sequence spans 145 residues: Pleckstrin homology domain-containing protein 1 (145 aa).

One can recognise a PH domain in the interval 26–127; the sequence is NPERSGWLTK…WINSIGRSIV (102 aa). The tract at residues 29–53 is binds specifically PtdIns3P; sequence RSGWLTKQGDYIKTWRRRWFVLKRG.

As to quaternary structure, binds PtdIns3P. In terms of tissue distribution, ubiquitously expressed.

The protein resides in the cytoplasm. Its function is as follows. Binds specifically to phosphatidylinositol 3-phosphate (PtdIns3P), but not to other phosphoinositides. This chain is Pleckstrin homology domain-containing protein 1 (PH1), found in Arabidopsis thaliana (Mouse-ear cress).